The following is a 495-amino-acid chain: UDP-N-acetylmuramoyl-L-alanyl-D-glutamate--2,6-diaminopimelate ligase (495 aa).

S29 provides a ligand contact to UDP-N-acetyl-alpha-D-muramoyl-L-alanyl-D-glutamate. 111 to 117 lines the ATP pocket; sequence GTNGKTS. Residues 153-154, S180, Q186, and R188 contribute to the UDP-N-acetyl-alpha-D-muramoyl-L-alanyl-D-glutamate site; that span reads TT. Position 220 is an N6-carboxylysine (K220). Residues R384, 408–411, G459, and E463 contribute to the meso-2,6-diaminopimelate site; that span reads DNPR. Residues 408–411 carry the Meso-diaminopimelate recognition motif motif; the sequence is DNPR.

It belongs to the MurCDEF family. MurE subfamily. Requires Mg(2+) as cofactor. Carboxylation is probably crucial for Mg(2+) binding and, consequently, for the gamma-phosphate positioning of ATP.

It is found in the cytoplasm. It carries out the reaction UDP-N-acetyl-alpha-D-muramoyl-L-alanyl-D-glutamate + meso-2,6-diaminopimelate + ATP = UDP-N-acetyl-alpha-D-muramoyl-L-alanyl-gamma-D-glutamyl-meso-2,6-diaminopimelate + ADP + phosphate + H(+). It functions in the pathway cell wall biogenesis; peptidoglycan biosynthesis. In terms of biological role, catalyzes the addition of meso-diaminopimelic acid to the nucleotide precursor UDP-N-acetylmuramoyl-L-alanyl-D-glutamate (UMAG) in the biosynthesis of bacterial cell-wall peptidoglycan. The sequence is that of UDP-N-acetylmuramoyl-L-alanyl-D-glutamate--2,6-diaminopimelate ligase from Xanthomonas oryzae pv. oryzae (strain MAFF 311018).